A 472-amino-acid chain; its full sequence is MSTSNGSTENIQKPLRKIPDITGTPILTAIKDRLDFFYNQGQYEYFQSRVKKNNSTILRMNMIPGPFASNPKIVALCDAASFPTLFDPSKVSKVNSLTGNYMPALSFTGGYRVCAYLDPSEPTHTKIKQVFFNAQAAKKDTFIPTFVSTFNSMFDKMDAEVESKKKAEFTKFNEAAVFEFVGLALVGPKPAREVFDSAKKSVFFQFHPFITAGLPALVEELAFHMFPFPSFVAKSSYKILYEYFSTGGSWILDNAEEIGLSREEAIHHLIFTWAINAYLGIRTCLMRLFKWIVASGPDLQEKLAREVRSVVRSEEGKITFAGIEKMELVKSVAYESFRFDPPVQVQYGTAKSDLIIESHDGKYQVKKGEMLCGFQPMATRDPKVFDRADEFVPDRFMGDGKKLVKHVLWANGYGTDAPKADDKICAGKDLGVLVGRLLIAVMFLRYDKIGGVVGKTMEEVDVIVNELTKVAV.

Cysteine 425 serves as a coordination point for heme.

It belongs to the cytochrome P450 family. Heme is required as a cofactor. As to expression, expressed mainly in bulbs, and at lower levels in roots.

The enzyme catalyses (13S)-hydroperoxy-(9Z,11E)-octadecadienoate = etheroleate + H2O. It catalyses the reaction (13S)-hydroperoxy-(9Z,11E,15Z)-octadecatrienoate = etherolenate + H2O. The catalysed reaction is (9S)-hydroperoxy-(10E,12Z)-octadecadienoate = colneleate + H2O. It carries out the reaction (9S)-hydroperoxy-(10E,12Z,15Z)-octadecatrienoate = colnelenate + H2O. The protein operates within lipid metabolism; oxylipin biosynthesis. In terms of biological role, divinyl ether synthase involved in oxylipin biosynthesis. Catalyzes the conversion of (13S)-hydroperoxy-(9Z,11E)-octadecadienoate (13-HPOD) to etheroleate and (13S)-hydroperoxy-(9Z,11E,15Z)-octadecatrienoate (13-HPOT) to etherolenate. Catalyzes the conversion of (9S)-hydroperoxy-(10E,12Z)-octadecadienoate (9-HPOD) to colneleate and (9S)-hydroperoxy-(10E,12Z,15Z)-octadecatrienoate (9-HPOT) colnelenate. This is Divinyl ether synthase CYP74 from Allium sativum (Garlic).